Reading from the N-terminus, the 465-residue chain is uncharacterized protein (465 aa).

Disordered stretches follow at residues 1–55, 70–164, and 221–313; these read MNSS…SSHQ, DFSE…VEGQ, and TTDN…KQRV. Basic and acidic residues predominate over residues 40–50; the sequence is ENYKDNSDHSN. Residues 73–82 are compositionally biased toward polar residues; the sequence is ESFNDNQNLK. Over residues 83–134 the composition is skewed to low complexity; the sequence is NFNTTDNNFNDDYNNDYDSNNDSNNDSNNDSNNDYDNESNNYFNNDSNNDSN. The segment covering 141–150 has biased composition (basic and acidic residues); sequence ETTKHKLPIE. A compositionally biased stretch (low complexity) spans 221-235; that stretch reads TTDNQSNTESSQENN. Basic and acidic residues-rich tracts occupy residues 236 to 249 and 259 to 275; these read VIKK…DKQP and IVPK…KSIK. Over residues 288–306 the composition is skewed to polar residues; the sequence is IDQSNKLGKSYNTNNNNSK. The stretch at 390 to 423 forms a coiled coil; it reads NKASIAELKKMRLEQRKREIEEKRRQVENKKPDS.

This is an uncharacterized protein from Acanthamoeba polyphaga mimivirus (APMV).